The sequence spans 111 residues: Cytochrome b-c1 complex subunit 7 (111 aa).

A2 is subject to N-acetylalanine. At K12 the chain carries N6-acetyllysine; alternate. N6-succinyllysine; alternate is present on K12. Position 19 is an N6-acetyllysine (K19). K78 bears the N6-acetyllysine; alternate mark. Residue K78 is modified to N6-succinyllysine; alternate. N6-acetyllysine occurs at positions 83 and 96.

This sequence belongs to the UQCRB/QCR7 family. Component of the ubiquinol-cytochrome c oxidoreductase (cytochrome b-c1 complex, complex III, CIII), a multisubunit enzyme composed of 11 subunits. The complex is composed of 3 respiratory subunits cytochrome b, cytochrome c1 and Rieske protein UQCRFS1, 2 core protein subunits UQCRC1/QCR1 and UQCRC2/QCR2, and 6 low-molecular weight protein subunits UQCRH/QCR6, UQCRB/QCR7, UQCRQ/QCR8, UQCR10/QCR9, UQCR11/QCR10 and subunit 9, the cleavage product of Rieske protein UQCRFS1. The complex exists as an obligatory dimer and forms supercomplexes (SCs) in the inner mitochondrial membrane with NADH-ubiquinone oxidoreductase (complex I, CI) and cytochrome c oxidase (complex IV, CIV), resulting in different assemblies (supercomplex SCI(1)III(2)IV(1) and megacomplex MCI(2)III(2)IV(2)).

It is found in the mitochondrion inner membrane. Component of the ubiquinol-cytochrome c oxidoreductase, a multisubunit transmembrane complex that is part of the mitochondrial electron transport chain which drives oxidative phosphorylation. The respiratory chain contains 3 multisubunit complexes succinate dehydrogenase (complex II, CII), ubiquinol-cytochrome c oxidoreductase (cytochrome b-c1 complex, complex III, CIII) and cytochrome c oxidase (complex IV, CIV), that cooperate to transfer electrons derived from NADH and succinate to molecular oxygen, creating an electrochemical gradient over the inner membrane that drives transmembrane transport and the ATP synthase. The cytochrome b-c1 complex catalyzes electron transfer from ubiquinol to cytochrome c, linking this redox reaction to translocation of protons across the mitochondrial inner membrane, with protons being carried across the membrane as hydrogens on the quinol. In the process called Q cycle, 2 protons are consumed from the matrix, 4 protons are released into the intermembrane space and 2 electrons are passed to cytochrome c. The protein is Cytochrome b-c1 complex subunit 7 (UQCRB) of Homo sapiens (Human).